A 393-amino-acid chain; its full sequence is S-adenosylmethionine synthase 1 (393 aa).

A Mg(2+)-binding site is contributed by glutamate 9. Histidine 15 is an ATP binding site. K(+) is bound at residue glutamate 43. The L-methionine site is built by glutamate 56 and glutamine 99. Residues 167–169 (DGK), 235–238 (SGRF), aspartate 246, 252–253 (RK), alanine 269, lysine 273, and lysine 277 each bind ATP. An L-methionine-binding site is contributed by aspartate 246. Lysine 277 serves as a coordination point for L-methionine.

This sequence belongs to the AdoMet synthase family. In terms of assembly, homotetramer. Requires Mn(2+) as cofactor. Mg(2+) is required as a cofactor. It depends on Co(2+) as a cofactor. The cofactor is K(+).

It is found in the cytoplasm. It carries out the reaction L-methionine + ATP + H2O = S-adenosyl-L-methionine + phosphate + diphosphate. It functions in the pathway amino-acid biosynthesis; S-adenosyl-L-methionine biosynthesis; S-adenosyl-L-methionine from L-methionine: step 1/1. In terms of biological role, catalyzes the formation of S-adenosylmethionine from methionine and ATP. The reaction comprises two steps that are both catalyzed by the same enzyme: formation of S-adenosylmethionine (AdoMet) and triphosphate, and subsequent hydrolysis of the triphosphate. The protein is S-adenosylmethionine synthase 1 (METK1) of Solanum tuberosum (Potato).